The chain runs to 299 residues: Tyrosine recombinase XerD (299 aa).

The Core-binding (CB) domain maps to 3-88 (QQDNPLIEQF…AMRRLFQYLY (86 aa)). Residues 109–293 (RLPKDLSEAQ…ATERLRQLHQ (185 aa)) form the Tyr recombinase domain. Active-site residues include arginine 149, lysine 173, histidine 245, arginine 248, and histidine 271. Residue tyrosine 280 is the O-(3'-phospho-DNA)-tyrosine intermediate of the active site.

It belongs to the 'phage' integrase family. XerD subfamily. In terms of assembly, forms a cyclic heterotetrameric complex composed of two molecules of XerC and two molecules of XerD, in which XerC interacts with XerD via its C-terminal region, XerD interacts with XerC via its C-terminal region and so on.

It is found in the cytoplasm. Its activity is regulated as follows. FtsK may regulate the catalytic switch between XerC and XerD in the heterotetrameric complex during the two steps of the recombination process. Site-specific tyrosine recombinase, which acts by catalyzing the cutting and rejoining of the recombining DNA molecules. Binds cooperatively to specific DNA consensus sequences that are separated from XerC binding sites by a short central region, forming the heterotetrameric XerC-XerD complex that recombines DNA substrates. The complex is essential to convert dimers of the bacterial chromosome into monomers to permit their segregation at cell division. It also contributes to the segregational stability of plasmids. In the complex XerD specifically exchanges the bottom DNA strands. The polypeptide is Tyrosine recombinase XerD (Yersinia pestis).